A 554-amino-acid polypeptide reads, in one-letter code: Hydroxylamine reductase (554 aa).

[2Fe-2S] cluster contacts are provided by C3, C6, C18, and C25. H252, E276, C320, C408, C436, C461, E495, and K497 together coordinate hybrid [4Fe-2O-2S] cluster. Residue C408 is modified to Cysteine persulfide.

Belongs to the HCP family. Requires [2Fe-2S] cluster as cofactor. The cofactor is hybrid [4Fe-2O-2S] cluster.

It localises to the cytoplasm. The catalysed reaction is A + NH4(+) + H2O = hydroxylamine + AH2 + H(+). Catalyzes the reduction of hydroxylamine to form NH(3) and H(2)O. This chain is Hydroxylamine reductase, found in Shewanella sp. (strain MR-7).